The primary structure comprises 448 residues: Vicilin Cor a 11.0101 (448 aa).

Basic and acidic residues predominate over residues 1 to 44; it reads MLPKEDPELKKCKHKCRDERQFDEQQRRDGKQICEEKARERQQE. The segment at 1-66 is disordered; it reads MLPKEDPELK…QEENPYVFQD (66 aa). N-linked (GlcNAc...) asparagine glycosylation occurs at asparagine 47. Cupin type-1 domains lie at 84–220 and 263–418; these read ENFT…EQLE and INLL…REVE. N-linked (GlcNAc...) asparagine glycosylation is present at asparagine 301. Cysteine 333, histidine 335, and histidine 362 together coordinate Cu cation.

The protein belongs to the 7S seed storage protein family. In terms of assembly, homotrimer. Homohexamer. Post-translationally, N-glycosylated at Asn-301 mostly with xylosylated paucimannosidic-type N-glycan MMX (an N-linked glycan with beta-1,2-xylose residue in the structure) and also with MMXF (a complex N-linked glycan with alpha-1,3-fucose and beta-1,2-xylose residues in the structure). In terms of processing, a mixture of proteolytically processed and unprocessed subunits exist. As to expression, expressed in seed (at protein level). Expressed in seed.

In terms of biological role, seed storage protein. Does not have superoxide dismutase (SOD) activity. This Corylus avellana (European hazel) protein is Vicilin Cor a 11.0101.